The primary structure comprises 85 residues: Small ribosomal subunit protein bS16c (85 aa).

The protein belongs to the bacterial ribosomal protein bS16 family.

It localises to the plastid. The protein localises to the chloroplast. The sequence is that of Small ribosomal subunit protein bS16c from Nicotiana tabacum (Common tobacco).